The following is a 272-amino-acid chain: Cytochrome b-c1 complex subunit Rieske-2, mitochondrial (272 aa).

The N-terminal 60 residues, 1–60, are a transit peptide targeting the mitochondrion; it reads MLRIAGRRASSLSRWPVRSVAPSSSAFISANHFSSDDDSSSPRSISPSLASVFLHHTRGF. Topologically, residues 61–109 are mitochondrial matrix; it reads SSNSVSHAHDMGLVPDLPPTVAAIKNPTSKIVYDEHNHERYPPGDPSKR. The chain crosses the membrane as a helical span at residues 110 to 132; it reads AFAYFVLTGGRFVYASLVRLLIL. Residues 133 to 272 lie on the Mitochondrial intermembrane side of the membrane; it reads KFVLSMSASK…FLEENKLLIG (140 aa). The 89-residue stretch at 182–270 folds into the Rieske domain; that stretch reads INLANSVDLG…YSFLEENKLL (89 aa). Residues C215, H217, C234, and H237 each contribute to the [2Fe-2S] cluster site. Residues C220 and C236 are joined by a disulfide bond.

Belongs to the Rieske iron-sulfur protein family. Component of the ubiquinol-cytochrome c oxidoreductase (cytochrome b-c1 complex, complex III, CIII), a multisubunit enzyme composed of 3 respiratory subunits cytochrome b, cytochrome c1 and Rieske protein, 2 core protein subunits, and several low-molecular weight protein subunits. The complex exists as an obligatory dimer and forms supercomplexes (SCs) in the inner mitochondrial membrane with cytochrome c oxidase (complex IV, CIV). [2Fe-2S] cluster serves as cofactor. High levels are seen in the flowers while a low level expression is seen in the roots, leaves and stems.

It localises to the mitochondrion inner membrane. The enzyme catalyses a quinol + 2 Fe(III)-[cytochrome c](out) = a quinone + 2 Fe(II)-[cytochrome c](out) + 2 H(+)(out). Component of the ubiquinol-cytochrome c oxidoreductase, a multisubunit transmembrane complex that is part of the mitochondrial electron transport chain which drives oxidative phosphorylation. The respiratory chain contains 3 multisubunit complexes succinate dehydrogenase (complex II, CII), ubiquinol-cytochrome c oxidoreductase (cytochrome b-c1 complex, complex III, CIII) and cytochrome c oxidase (complex IV, CIV), that cooperate to transfer electrons derived from NADH and succinate to molecular oxygen, creating an electrochemical gradient over the inner membrane that drives transmembrane transport and the ATP synthase. The cytochrome b-c1 complex catalyzes electron transfer from ubiquinol to cytochrome c, linking this redox reaction to translocation of protons across the mitochondrial inner membrane, with protons being carried across the membrane as hydrogens on the quinol. In the process called Q cycle, 2 protons are consumed from the matrix, 4 protons are released into the intermembrane space and 2 electrons are passed to cytochrome c. The Rieske protein is a catalytic core subunit containing a [2Fe-2S] iron-sulfur cluster. It cycles between 2 conformational states during catalysis to transfer electrons from the quinol bound in the Q(0) site in cytochrome b to cytochrome c1. The sequence is that of Cytochrome b-c1 complex subunit Rieske-2, mitochondrial from Nicotiana tabacum (Common tobacco).